Consider the following 438-residue polypeptide: Phosphoribosylamine--glycine ligase (438 aa).

The ATP-grasp domain occupies 107 to 319 (RKLFEDYDIP…LAKISKQIVD (213 aa)). ATP is bound at residue 134-197 (IDNFDEPVVV…EELLLGEEYT (64 aa)). Positions 277, 289, and 291 each coordinate Mg(2+). The Mn(2+) site is built by Gln277, Glu289, and Asn291.

This sequence belongs to the GARS family. Mg(2+) serves as cofactor. It depends on Mn(2+) as a cofactor.

The catalysed reaction is 5-phospho-beta-D-ribosylamine + glycine + ATP = N(1)-(5-phospho-beta-D-ribosyl)glycinamide + ADP + phosphate + H(+). It functions in the pathway purine metabolism; IMP biosynthesis via de novo pathway; N(1)-(5-phospho-D-ribosyl)glycinamide from 5-phospho-alpha-D-ribose 1-diphosphate: step 2/2. This Methanosphaera stadtmanae (strain ATCC 43021 / DSM 3091 / JCM 11832 / MCB-3) protein is Phosphoribosylamine--glycine ligase.